The following is a 179-amino-acid chain: Ribosome maturation factor RimM (179 aa).

One can recognise a PRC barrel domain in the interval 100–176 (KEEFHLLELI…FLIINPPNGL (77 aa)).

This sequence belongs to the RimM family. As to quaternary structure, binds ribosomal protein uS19.

It localises to the cytoplasm. In terms of biological role, an accessory protein needed during the final step in the assembly of 30S ribosomal subunit, possibly for assembly of the head region. Essential for efficient processing of 16S rRNA. May be needed both before and after RbfA during the maturation of 16S rRNA. It has affinity for free ribosomal 30S subunits but not for 70S ribosomes. The protein is Ribosome maturation factor RimM of Prochlorococcus marinus (strain AS9601).